Here is a 734-residue protein sequence, read N- to C-terminus: Ribosomal RNA large subunit methyltransferase K/L (734 aa).

In terms of domain architecture, THUMP spans 49–167 (HAYRICMWSR…KTEHTYCLDL (119 aa)).

It belongs to the methyltransferase superfamily. RlmKL family.

The protein localises to the cytoplasm. The catalysed reaction is guanosine(2445) in 23S rRNA + S-adenosyl-L-methionine = N(2)-methylguanosine(2445) in 23S rRNA + S-adenosyl-L-homocysteine + H(+). It catalyses the reaction guanosine(2069) in 23S rRNA + S-adenosyl-L-methionine = N(2)-methylguanosine(2069) in 23S rRNA + S-adenosyl-L-homocysteine + H(+). Functionally, specifically methylates the guanine in position 2445 (m2G2445) and the guanine in position 2069 (m7G2069) of 23S rRNA. The protein is Ribosomal RNA large subunit methyltransferase K/L of Acinetobacter baumannii (strain ACICU).